The following is a 186-amino-acid chain: Elongation factor P (186 aa).

This sequence belongs to the elongation factor P family.

The protein resides in the cytoplasm. The protein operates within protein biosynthesis; polypeptide chain elongation. Involved in peptide bond synthesis. Stimulates efficient translation and peptide-bond synthesis on native or reconstituted 70S ribosomes in vitro. Probably functions indirectly by altering the affinity of the ribosome for aminoacyl-tRNA, thus increasing their reactivity as acceptors for peptidyl transferase. The polypeptide is Elongation factor P (Streptococcus gordonii (strain Challis / ATCC 35105 / BCRC 15272 / CH1 / DL1 / V288)).